A 206-amino-acid chain; its full sequence is LexA repressor (206 aa).

A DNA-binding region (H-T-H motif) is located at residues 28–48 (RAEIARRLGFKSANAAEEHLK). Active-site for autocatalytic cleavage activity residues include serine 123 and lysine 160.

The protein belongs to the peptidase S24 family. In terms of assembly, homodimer.

The enzyme catalyses Hydrolysis of Ala-|-Gly bond in repressor LexA.. Functionally, represses a number of genes involved in the response to DNA damage (SOS response), including recA and lexA. In the presence of single-stranded DNA, RecA interacts with LexA causing an autocatalytic cleavage which disrupts the DNA-binding part of LexA, leading to derepression of the SOS regulon and eventually DNA repair. The chain is LexA repressor from Shewanella piezotolerans (strain WP3 / JCM 13877).